Consider the following 116-residue polypeptide: Large ribosomal subunit protein bL19 (116 aa).

The protein belongs to the bacterial ribosomal protein bL19 family.

Functionally, this protein is located at the 30S-50S ribosomal subunit interface and may play a role in the structure and function of the aminoacyl-tRNA binding site. The polypeptide is Large ribosomal subunit protein bL19 (Syntrophomonas wolfei subsp. wolfei (strain DSM 2245B / Goettingen)).